We begin with the raw amino-acid sequence, 566 residues long: MKTKQEKKARPGSIMRLLWSSHPWLTFFTLLTGLISGVASIAVVNVINQAIHEETFQRQSLFWFVGLSVVALLFRNGASLFPAYASMRIMTRLRIALCRKILGTPLEEVDRRGAPNVLTLLTSDIPQLNATLLIMPTILVESAVFLFGIAYLAYLSWVVFAITISLMILGVAMYLLFFMGGMKFTHKVRDEFTAFNEYTHALVFGLKELKLNGIRRRWFSRSAIQESSVRVAKYNYIERLWFTAAENVGQLTLSLLVGCLLFAAPMFAVIDAKTMSASVLAVLYIMGPLVMLVSAMPMLAQGRIACTRLADFGFSINEPHPEPETSDADNVLLLDHKKSWGSIQLKNVHMNYKDPQSSSGFALGPIDLTIHSGELVYIVGGNGCGKSTLAKVFCGLYIPQEGQLLLDGAAVTDDSRGDYRDLFSAVFSDFHLFNRLIGPDEKEHPSTDQAQTYLSTLGLEDKVKIEGLGYSTTTALSYGQQKRLALVCAYLEDRPIYLLDEWAADQDPPFKRFFYEELLPDLKRRGKTILIITHDDQYFQLADRIIKLADGCIVSDVKCAVEGKRA.

The region spanning 22–301 (HPWLTFFTLL…LVSAMPMLAQ (280 aa)) is the ABC transmembrane type-1 domain. 6 helical membrane passes run 24 to 44 (WLTFFTLLTGLISGVASIAVV), 61 to 81 (LFWFVGLSVVALLFRNGASLF), 132 to 152 (LLIMPTILVESAVFLFGIAYL), 158 to 178 (VVFAITISLMILGVAMYLLFF), 250 to 270 (QLTLSLLVGCLLFAAPMFAVI), and 279 to 299 (VLAVLYIMGPLVMLVSAMPML). In terms of domain architecture, ABC transporter spans 343-566 (IQLKNVHMNY…VKCAVEGKRA (224 aa)). Position 380 to 387 (380 to 387 (GGNGCGKS)) interacts with ATP.

It belongs to the ABC transporter superfamily. As to quaternary structure, dimer.

The protein localises to the cell inner membrane. In terms of biological role, ATP-driven efflux pump necessary for the secretion of syringomycin. May specifically bind syringomycin and translocate it to the periplasmic space. SyrD is also required for full expression of the syrB gene. This chain is ATP-binding protein SyrD (syrD), found in Pseudomonas syringae pv. syringae.